Here is a 269-residue protein sequence, read N- to C-terminus: Putative 6-phosphogluconolactonase (269 aa).

Residues 248–269 (DAATGVPDRDSSDSDSPPPFDG) are disordered.

This sequence belongs to the glucosamine/galactosamine-6-phosphate isomerase family. 6-phosphogluconolactonase subfamily.

It localises to the nucleus. It catalyses the reaction 6-phospho-D-glucono-1,5-lactone + H2O = 6-phospho-D-gluconate + H(+). The protein operates within carbohydrate degradation; pentose phosphate pathway; D-ribulose 5-phosphate from D-glucose 6-phosphate (oxidative stage): step 2/3. Its function is as follows. Hydrolysis of 6-phosphogluconolactone to 6-phosphogluconate. In Caenorhabditis elegans, this protein is Putative 6-phosphogluconolactonase.